The primary structure comprises 420 residues: 4-hydroxy-3-methylbut-2-en-1-yl diphosphate synthase (flavodoxin) (420 aa).

Positions 307, 310, 353, and 360 each coordinate [4Fe-4S] cluster.

This sequence belongs to the IspG family. [4Fe-4S] cluster serves as cofactor.

The catalysed reaction is (2E)-4-hydroxy-3-methylbut-2-enyl diphosphate + oxidized [flavodoxin] + H2O + 2 H(+) = 2-C-methyl-D-erythritol 2,4-cyclic diphosphate + reduced [flavodoxin]. It functions in the pathway isoprenoid biosynthesis; isopentenyl diphosphate biosynthesis via DXP pathway; isopentenyl diphosphate from 1-deoxy-D-xylulose 5-phosphate: step 5/6. Its function is as follows. Converts 2C-methyl-D-erythritol 2,4-cyclodiphosphate (ME-2,4cPP) into 1-hydroxy-2-methyl-2-(E)-butenyl 4-diphosphate. The protein is 4-hydroxy-3-methylbut-2-en-1-yl diphosphate synthase (flavodoxin) of Brucella abortus (strain S19).